The following is a 370-amino-acid chain: Protein STRICTOSIDINE SYNTHASE-LIKE 4 (370 aa).

Positions 1–21 (MVLFFSTRFLFFSIFFPCLIS) are cleaved as a signal peptide. A glycan (N-linked (GlcNAc...) asparagine) is linked at N101. Position 303 is a phosphotyrosine (Y303).

The protein belongs to the strictosidine synthase family.

The protein resides in the vacuole. The protein is Protein STRICTOSIDINE SYNTHASE-LIKE 4 of Arabidopsis thaliana (Mouse-ear cress).